The chain runs to 476 residues: Adenosylhomocysteinase (476 aa).

3 residues coordinate substrate: Thr-62, Asp-141, and Glu-201. 202–204 contacts NAD(+); the sequence is TTT. Residues Lys-231 and Asp-235 each contribute to the substrate site. Residues Asn-236, 265 to 270, Glu-288, Asn-323, 344 to 346, and Asn-389 each bind NAD(+); these read GYGDVG and IGH.

It belongs to the adenosylhomocysteinase family. NAD(+) is required as a cofactor.

The protein resides in the cytoplasm. The catalysed reaction is S-adenosyl-L-homocysteine + H2O = L-homocysteine + adenosine. It functions in the pathway amino-acid biosynthesis; L-homocysteine biosynthesis; L-homocysteine from S-adenosyl-L-homocysteine: step 1/1. Functionally, may play a key role in the regulation of the intracellular concentration of adenosylhomocysteine. The protein is Adenosylhomocysteinase of Delftia acidovorans (strain DSM 14801 / SPH-1).